Consider the following 196-residue polypeptide: MNEAVSPGALSTLFTDARTHNGWRETPVSDETLRELYALMKWGPTSANCSPARFVFIRTAEGKERLRPALSSGNLQKTLTAPVTAIVAWDSEFYERLPQLFPHGDARSWFTSSPQLAEETAFRNSSMQAAYLIVACRALGLDTGPMSGFDRQHVDDAFFAGSTLKSNLLINIGYGDSSKLYARLPRLSFEEACGLL.

The protein belongs to the nitroreductase family. HadB/RutE subfamily. Requires FMN as cofactor.

The catalysed reaction is 3-hydroxypropanoate + NADP(+) = 3-oxopropanoate + NADPH + H(+). In terms of biological role, may reduce toxic product malonic semialdehyde to 3-hydroxypropionic acid, which is excreted. This chain is Probable malonic semialdehyde reductase RutE, found in Escherichia coli (strain SMS-3-5 / SECEC).